The chain runs to 287 residues: Putative S-adenosyl-L-methionine-dependent methyltransferase SACE_1742 (287 aa).

S-adenosyl-L-methionine-binding positions include aspartate 119 and 148 to 149 (DL).

The protein belongs to the UPF0677 family.

Its function is as follows. Exhibits S-adenosyl-L-methionine-dependent methyltransferase activity. In Saccharopolyspora erythraea (strain ATCC 11635 / DSM 40517 / JCM 4748 / NBRC 13426 / NCIMB 8594 / NRRL 2338), this protein is Putative S-adenosyl-L-methionine-dependent methyltransferase SACE_1742.